The primary structure comprises 742 residues: Polyribonucleotide nucleotidyltransferase (742 aa).

Mg(2+) is bound by residues D515 and D521. Positions 581-640 (PRIITITIPVDKIGEVIGPKGKIINQIQDDTGASISIEDDGTIYIGATNGEAAEAAKNAV) constitute a KH domain. One can recognise an S1 motif domain in the interval 652-724 (GERYLGTVVK…DRGKLSLVPV (73 aa)).

It belongs to the polyribonucleotide nucleotidyltransferase family. It depends on Mg(2+) as a cofactor.

It is found in the cytoplasm. The catalysed reaction is RNA(n+1) + phosphate = RNA(n) + a ribonucleoside 5'-diphosphate. Its function is as follows. Involved in mRNA degradation. Catalyzes the phosphorolysis of single-stranded polyribonucleotides processively in the 3'- to 5'-direction. This is Polyribonucleotide nucleotidyltransferase from Nocardioides sp. (strain ATCC BAA-499 / JS614).